A 121-amino-acid chain; its full sequence is Large ribosomal subunit protein uL14 (121 aa).

It belongs to the universal ribosomal protein uL14 family. In terms of assembly, part of the 50S ribosomal subunit. Forms a cluster with proteins L3 and L19. In the 70S ribosome, L14 and L19 interact and together make contacts with the 16S rRNA in bridges B5 and B8.

Binds to 23S rRNA. Forms part of two intersubunit bridges in the 70S ribosome. This is Large ribosomal subunit protein uL14 from Synechococcus sp. (strain RCC307).